The following is a 241-amino-acid chain: Large ribosomal subunit protein uL3 (241 aa).

Disordered regions lie at residues 139–166 and 209–241; these read VSHR…PGHM and KKPL…KEGA. Position 151 is an N5-methylglutamine (glutamine 151).

This sequence belongs to the universal ribosomal protein uL3 family. Part of the 50S ribosomal subunit. Forms a cluster with proteins L14 and L19. Methylated by PrmB.

Functionally, one of the primary rRNA binding proteins, it binds directly near the 3'-end of the 23S rRNA, where it nucleates assembly of the 50S subunit. This is Large ribosomal subunit protein uL3 from Nitrobacter hamburgensis (strain DSM 10229 / NCIMB 13809 / X14).